A 247-amino-acid polypeptide reads, in one-letter code: 2,3-bisphosphoglycerate-dependent phosphoglycerate mutase (247 aa).

Residues 8 to 15, 21 to 22, R60, 87 to 90, K98, 114 to 115, and 183 to 184 contribute to the substrate site; these read RHGESTWN, TG, ERHY, RR, and GN. H9 acts as the Tele-phosphohistidine intermediate in catalysis. The active-site Proton donor/acceptor is E87.

Belongs to the phosphoglycerate mutase family. BPG-dependent PGAM subfamily. As to quaternary structure, homodimer.

The catalysed reaction is (2R)-2-phosphoglycerate = (2R)-3-phosphoglycerate. Its pathway is carbohydrate degradation; glycolysis; pyruvate from D-glyceraldehyde 3-phosphate: step 3/5. In terms of biological role, catalyzes the interconversion of 2-phosphoglycerate and 3-phosphoglycerate. In Leptothrix cholodnii (strain ATCC 51168 / LMG 8142 / SP-6) (Leptothrix discophora (strain SP-6)), this protein is 2,3-bisphosphoglycerate-dependent phosphoglycerate mutase.